The primary structure comprises 338 residues: tRNA N6-adenosine threonylcarbamoyltransferase (338 aa).

The Fe cation site is built by H111 and H115. Substrate is bound by residues 134–138, D167, G180, D184, and N272; that span reads VVSGG. A Fe cation-binding site is contributed by D300.

Belongs to the KAE1 / TsaD family. It depends on Fe(2+) as a cofactor.

It localises to the cytoplasm. It carries out the reaction L-threonylcarbamoyladenylate + adenosine(37) in tRNA = N(6)-L-threonylcarbamoyladenosine(37) in tRNA + AMP + H(+). In terms of biological role, required for the formation of a threonylcarbamoyl group on adenosine at position 37 (t(6)A37) in tRNAs that read codons beginning with adenine. Is involved in the transfer of the threonylcarbamoyl moiety of threonylcarbamoyl-AMP (TC-AMP) to the N6 group of A37, together with TsaE and TsaB. TsaD likely plays a direct catalytic role in this reaction. This is tRNA N6-adenosine threonylcarbamoyltransferase from Syntrophus aciditrophicus (strain SB).